The chain runs to 447 residues: Phosphoglucosamine mutase (447 aa).

Residue S102 is the Phosphoserine intermediate of the active site. S102, D241, D243, and D245 together coordinate Mg(2+). Phosphoserine is present on S102.

It belongs to the phosphohexose mutase family. The cofactor is Mg(2+). Post-translationally, activated by phosphorylation.

It catalyses the reaction alpha-D-glucosamine 1-phosphate = D-glucosamine 6-phosphate. Its function is as follows. Catalyzes the conversion of glucosamine-6-phosphate to glucosamine-1-phosphate. The polypeptide is Phosphoglucosamine mutase (Pseudomonas syringae pv. syringae (strain B728a)).